The chain runs to 826 residues: Periplasmic nitrate reductase (826 aa).

Positions 1–32 (MSISRREFLKANAAVAAATAVGATLPVKIVEA) form a signal peptide, tat-type signal. Residues 39–95 (IKWDKAPCRFCGVGCSVLVGTDNGKVVATKGDPESPVNKGLNCIKGYFLSKIMYGKD) enclose the 4Fe-4S Mo/W bis-MGD-type domain. Residues C46, C49, C53, and C81 each coordinate [4Fe-4S] cluster. Mo-bis(molybdopterin guanine dinucleotide)-binding positions include K83, Q150, N175, C179, 212 to 219 (WGANMAEM), 262 to 264 (QSD), M372, Q376, N482, 508 to 509 (SD), K531, D558, and 716 to 725 (TGRVLEHWHT). F792 is a substrate binding site. The Mo-bis(molybdopterin guanine dinucleotide) site is built by N800 and K817.

The protein belongs to the prokaryotic molybdopterin-containing oxidoreductase family. NasA/NapA/NarB subfamily. Component of the periplasmic nitrate reductase NapAB complex composed of NapA and NapB. [4Fe-4S] cluster is required as a cofactor. It depends on Mo-bis(molybdopterin guanine dinucleotide) as a cofactor. Post-translationally, predicted to be exported by the Tat system. The position of the signal peptide cleavage has not been experimentally proven.

The protein localises to the periplasm. The catalysed reaction is 2 Fe(II)-[cytochrome] + nitrate + 2 H(+) = 2 Fe(III)-[cytochrome] + nitrite + H2O. Catalytic subunit of the periplasmic nitrate reductase complex NapAB. Receives electrons from NapB and catalyzes the reduction of nitrate to nitrite. This Shewanella halifaxensis (strain HAW-EB4) protein is Periplasmic nitrate reductase.